The primary structure comprises 471 residues: PE-PGRS family protein PE_PGRS33 (471 aa).

Residues 1–30 (MSFVVTIPEALAAVATDLAGIGSTIGTANA) are essential for translocation to the cell surface. The PE domain maps to 1–93 (MSFVVTIPEA…AGSYAAAEAA (93 aa)). The interval 140-230 (GNGGAGGSGA…GLFFGVGGAG (91 aa)) is interacts with TLR2.

Belongs to the mycobacterial PE family. PGRS subfamily. Interacts with human TLR2.

It is found in the secreted. Its subcellular location is the cell wall. The protein resides in the cell surface. It localises to the cell outer membrane. Induces TNF-alpha release through human Toll-like receptor 2 (TLR2) signaling pathway, leading to macrophage apoptosis. This chain is PE-PGRS family protein PE_PGRS33 (PE_PGRS33), found in Mycobacterium tuberculosis (strain CDC 1551 / Oshkosh).